The primary structure comprises 105 residues: Large ribosomal subunit protein eL36 (105 aa).

Residues 1–20 are disordered; that stretch reads MAKEAPAKTGLAVGLNKGHK.

This sequence belongs to the eukaryotic ribosomal protein eL36 family.

This Trichoderma hamatum protein is Large ribosomal subunit protein eL36 (rpl36).